A 256-amino-acid chain; its full sequence is Small ribosomal subunit protein uS2 (256 aa).

The tract at residues 229–256 (PVDDNGDYGDFDEAIDEYADETDASESE) is disordered. Positions 232–256 (DNGDYGDFDEAIDEYADETDASESE) are enriched in acidic residues.

Belongs to the universal ribosomal protein uS2 family.

This chain is Small ribosomal subunit protein uS2, found in Picosynechococcus sp. (strain ATCC 27264 / PCC 7002 / PR-6) (Agmenellum quadruplicatum).